The primary structure comprises 147 residues: Hemoglobin subunit epsilon (147 aa).

The region spanning 3 to 147 (HFTAEEKAAV…VAIALAHKYH (145 aa)) is the Globin domain. A phosphoserine mark is found at Ser14 and Ser51. Positions 64 and 93 each coordinate heme b.

It belongs to the globin family. In terms of assembly, heterotetramer of two alpha chains and two epsilon chains in early embryonic hemoglobin Gower-2; two zeta chains and two epsilon chains in early embryonic hemoglobin Gower-1. As to expression, red blood cells.

Its function is as follows. The epsilon chain is a beta-type chain of early mammalian embryonic hemoglobin. This Symphalangus syndactylus (Siamang) protein is Hemoglobin subunit epsilon (HBE1).